Reading from the N-terminus, the 327-residue chain is Undecaprenyl-phosphate 4-deoxy-4-formamido-L-arabinose transferase (327 aa).

Over 1-235 the chain is Cytoplasmic; it reads MFDAAPIKKV…TCLTTTPLRL (235 aa). Residues 236–256 traverse the membrane as a helical segment; it reads LSLLGSVIAIGGFSLSVLLIV. The Periplasmic segment spans residues 257–269; it reads LRLALGPQWAAEG. Residues 270-290 traverse the membrane as a helical segment; it reads VFMLFAVLFTFIGAQFIGMGL. Residues 291 to 327 lie on the Cytoplasmic side of the membrane; it reads LGEYIGRIYNDVRARPRYFVQQVIYPESTSFTEESHQ.

The protein belongs to the glycosyltransferase 2 family.

Its subcellular location is the cell inner membrane. It carries out the reaction UDP-4-deoxy-4-formamido-beta-L-arabinose + di-trans,octa-cis-undecaprenyl phosphate = 4-deoxy-4-formamido-alpha-L-arabinopyranosyl di-trans,octa-cis-undecaprenyl phosphate + UDP. The protein operates within glycolipid biosynthesis; 4-amino-4-deoxy-alpha-L-arabinose undecaprenyl phosphate biosynthesis; 4-amino-4-deoxy-alpha-L-arabinose undecaprenyl phosphate from UDP-4-deoxy-4-formamido-beta-L-arabinose and undecaprenyl phosphate: step 1/2. It participates in bacterial outer membrane biogenesis; lipopolysaccharide biosynthesis. In terms of biological role, catalyzes the transfer of 4-deoxy-4-formamido-L-arabinose from UDP to undecaprenyl phosphate. The modified arabinose is attached to lipid A and is required for resistance to polymyxin and cationic antimicrobial peptides. The protein is Undecaprenyl-phosphate 4-deoxy-4-formamido-L-arabinose transferase of Salmonella newport (strain SL254).